Reading from the N-terminus, the 160-residue chain is S-adenosylmethionine decarboxylase proenzyme (160 aa).

The active-site Schiff-base intermediate with substrate; via pyruvic acid is serine 73. Position 73 is a pyruvic acid (Ser); by autocatalysis (serine 73). Histidine 78 functions as the Proton acceptor; for processing activity in the catalytic mechanism. Cysteine 93 (proton donor; for catalytic activity) is an active-site residue.

It belongs to the prokaryotic AdoMetDC family. Type 1 subfamily. In terms of assembly, heterotetramer of two alpha and two beta chains arranged as a dimer of alpha/beta heterodimers. Pyruvate serves as cofactor. Post-translationally, is synthesized initially as an inactive proenzyme. Formation of the active enzyme involves a self-maturation process in which the active site pyruvoyl group is generated from an internal serine residue via an autocatalytic post-translational modification. Two non-identical subunits are generated from the proenzyme in this reaction, and the pyruvate is formed at the N-terminus of the alpha chain, which is derived from the carboxyl end of the proenzyme. The post-translation cleavage follows an unusual pathway, termed non-hydrolytic serinolysis, in which the side chain hydroxyl group of the serine supplies its oxygen atom to form the C-terminus of the beta chain, while the remainder of the serine residue undergoes an oxidative deamination to produce ammonia and the pyruvoyl group blocking the N-terminus of the alpha chain.

It catalyses the reaction S-adenosyl-L-methionine + H(+) = S-adenosyl 3-(methylsulfanyl)propylamine + CO2. The protein operates within amine and polyamine biosynthesis; S-adenosylmethioninamine biosynthesis; S-adenosylmethioninamine from S-adenosyl-L-methionine: step 1/1. Its function is as follows. Catalyzes the decarboxylation of S-adenosylmethionine to S-adenosylmethioninamine (dcAdoMet), the propylamine donor required for the synthesis of the polyamines spermine and spermidine from the diamine putrescine. This is S-adenosylmethionine decarboxylase proenzyme from Pseudomonas aeruginosa (strain LESB58).